The primary structure comprises 587 residues: Glutamine--tRNA ligase (587 aa).

Positions 58–68 match the 'HIGH' region motif; the sequence is PEPNGYLHIGH. Residues 59–61 and 65–71 each bind ATP; these read EPN and HIGHAKS. 2 residues coordinate L-glutamine: Asp-91 and Tyr-240. Residues Thr-259 and 294–295 contribute to the ATP site; that span reads RL. The 'KMSKS' region motif lies at 301–305; that stretch reads VTSKR.

This sequence belongs to the class-I aminoacyl-tRNA synthetase family. Monomer.

The protein localises to the cytoplasm. It carries out the reaction tRNA(Gln) + L-glutamine + ATP = L-glutaminyl-tRNA(Gln) + AMP + diphosphate. The chain is Glutamine--tRNA ligase from Bordetella parapertussis (strain 12822 / ATCC BAA-587 / NCTC 13253).